The chain runs to 199 residues: Probable GTP-binding protein EngB (199 aa).

One can recognise an EngB-type G domain in the interval 28-199; it reads DLPEVALAGR…EAWDTILAEL (172 aa). GTP is bound by residues 36 to 43, 63 to 67, 81 to 84, 148 to 151, and 180 to 182; these read GRSNVGKS, GKTQL, DVPG, TKAD, and FSS. Positions 43 and 65 each coordinate Mg(2+).

This sequence belongs to the TRAFAC class TrmE-Era-EngA-EngB-Septin-like GTPase superfamily. EngB GTPase family. Mg(2+) is required as a cofactor.

In terms of biological role, necessary for normal cell division and for the maintenance of normal septation. In Streptococcus thermophilus (strain CNRZ 1066), this protein is Probable GTP-binding protein EngB.